Here is a 164-residue protein sequence, read N- to C-terminus: Phosphopantetheine adenylyltransferase (164 aa).

Threonine 14 provides a ligand contact to substrate. ATP contacts are provided by residues 14-15 and histidine 22; that span reads TF. Residues lysine 46, leucine 78, and arginine 92 each coordinate substrate. ATP contacts are provided by residues 93 to 95, glutamate 103, and 128 to 134; these read GLR and HAFISST.

Belongs to the bacterial CoaD family. In terms of assembly, homohexamer. It depends on Mg(2+) as a cofactor.

It localises to the cytoplasm. The catalysed reaction is (R)-4'-phosphopantetheine + ATP + H(+) = 3'-dephospho-CoA + diphosphate. It functions in the pathway cofactor biosynthesis; coenzyme A biosynthesis; CoA from (R)-pantothenate: step 4/5. Its function is as follows. Reversibly transfers an adenylyl group from ATP to 4'-phosphopantetheine, yielding dephospho-CoA (dPCoA) and pyrophosphate. The chain is Phosphopantetheine adenylyltransferase from Vibrio cholerae serotype O1 (strain ATCC 39541 / Classical Ogawa 395 / O395).